A 541-amino-acid polypeptide reads, in one-letter code: L-ornithine N(5)-monooxygenase (541 aa).

FAD contacts are provided by residues 50–58 (EKQPEFQWH) and Q69. Residue K74 coordinates substrate. Position 223-226 (223-226 (SGQS)) interacts with NADP(+). Substrate-binding positions include 269–272 (NEIF) and N300. 300–302 (NYS) provides a ligand contact to NADP(+). Positions 430–474 (TEIPKGPDGSLFDASEEEATWRPASPITPASPSPPSTPTSSALSQ) are disordered. Position 520-522 (520-522 (SLL)) interacts with FAD. S523 is a substrate binding site.

It belongs to the lysine N(6)-hydroxylase/L-ornithine N(5)-oxygenase family. As to quaternary structure, homotetramer. The cofactor is FAD.

It catalyses the reaction L-ornithine + NADPH + O2 = N(5)-hydroxy-L-ornithine + NADP(+) + H2O. It carries out the reaction L-ornithine + NADH + O2 = N(5)-hydroxy-L-ornithine + NAD(+) + H2O. It participates in siderophore biosynthesis. Its function is as follows. L-ornithine N(5)-monooxygenase; part of the siderophore basidioferrin biosynthetic pathway. The biosynthesis of basidioferrin depends on the hydroxylation of ornithine to N(5)-hydroxyornithine, catalyzed by the monooxygenase SMO1. The second step, the acylation of N(5)-hydroxy-L-ornithine is catalyzed by a not yet identified N-acyltransferase. Finally, assembly of basidioferrin is catalyzed by the nonribosomal peptide synthase (NRPS) NPS2 via amide bond formation between three L-AHO molecules to release the linear L-AHO trimer. In Ceriporiopsis subvermispora (strain B) (White-rot fungus), this protein is L-ornithine N(5)-monooxygenase (SMO1).